We begin with the raw amino-acid sequence, 404 residues long: MKLPIYLDYSATTPVDPRVAQKMSECLLVDGNFGNPASRSHVFGWKAEEAVENARRQVAELVNADPREIVWTSGATESDNLAIKGVAHFYASKGKHIITSKIEHKAVLDTTRQLEREGFEVTYLEPGEDGLITPAMVEAALRDDTTLVSVMHVNNEIGTINDIAAIGELTRSRGVLLHVDAAQSTGKVEIDLEKMKVDLMSFSAHKTYGPKGVGALYVRRKPRVRLEAQTHGGGHERGMRSGTLATHQCVGMGEAFRIAKEDMAAENQRITALRDRFYRQLEGMEELYVNGSLTARVPHNLNLSFNYVEGESLIMALKDLAVSSGSACTSASLEPSYVLRALGRNDELAHSSIRFTFGRFTTEEEVDYAAAKVREAVDKLRELSPLWDMFKEGVDLSSVEWAAH.

Residues 75–76, Asn-155, Gln-183, and 203–205 each bind pyridoxal 5'-phosphate; these read AT and SAH. An N6-(pyridoxal phosphate)lysine modification is found at Lys-206. Thr-243 contributes to the pyridoxal 5'-phosphate binding site. Cys-328 serves as the catalytic Cysteine persulfide intermediate. Cys-328 is a binding site for [2Fe-2S] cluster.

This sequence belongs to the class-V pyridoxal-phosphate-dependent aminotransferase family. NifS/IscS subfamily. In terms of assembly, homodimer. Forms a heterotetramer with IscU, interacts with other sulfur acceptors. Pyridoxal 5'-phosphate is required as a cofactor.

The protein resides in the cytoplasm. It carries out the reaction (sulfur carrier)-H + L-cysteine = (sulfur carrier)-SH + L-alanine. Its pathway is cofactor biosynthesis; iron-sulfur cluster biosynthesis. Functionally, master enzyme that delivers sulfur to a number of partners involved in Fe-S cluster assembly, tRNA modification or cofactor biosynthesis. Catalyzes the removal of elemental sulfur atoms from cysteine to produce alanine. Functions as a sulfur delivery protein for Fe-S cluster synthesis onto IscU, an Fe-S scaffold assembly protein, as well as other S acceptor proteins. The sequence is that of Cysteine desulfurase IscS from Ectopseudomonas mendocina (strain ymp) (Pseudomonas mendocina).